A 589-amino-acid chain; its full sequence is Aspartate--tRNA ligase (589 aa).

Glutamate 175 contacts L-aspartate. The interval 199 to 202 is aspartate; sequence QIFK. Arginine 221 lines the L-aspartate pocket. ATP-binding positions include 221-223 and glutamine 230; that span reads RDE. Histidine 449 serves as a coordination point for L-aspartate. Glutamate 483 lines the ATP pocket. Arginine 490 is a binding site for L-aspartate. 535–538 contacts ATP; it reads GLDR.

This sequence belongs to the class-II aminoacyl-tRNA synthetase family. Type 1 subfamily. Homodimer.

Its subcellular location is the cytoplasm. It catalyses the reaction tRNA(Asp) + L-aspartate + ATP = L-aspartyl-tRNA(Asp) + AMP + diphosphate. Functionally, catalyzes the attachment of L-aspartate to tRNA(Asp) in a two-step reaction: L-aspartate is first activated by ATP to form Asp-AMP and then transferred to the acceptor end of tRNA(Asp). In Shouchella clausii (strain KSM-K16) (Alkalihalobacillus clausii), this protein is Aspartate--tRNA ligase.